Reading from the N-terminus, the 318-residue chain is NADH-ubiquinone oxidoreductase chain 1 (318 aa).

Helical transmembrane passes span Phe-2–Leu-22, Leu-70–Pro-90, Leu-100–Gly-120, Val-136–Met-156, His-171–Ala-191, Ile-231–Leu-251, Glu-253–Ile-273, and Phe-293–Gly-313.

Belongs to the complex I subunit 1 family. Core subunit of respiratory chain NADH dehydrogenase (Complex I) which is composed of 45 different subunits.

Its subcellular location is the mitochondrion inner membrane. The catalysed reaction is a ubiquinone + NADH + 5 H(+)(in) = a ubiquinol + NAD(+) + 4 H(+)(out). In terms of biological role, core subunit of the mitochondrial membrane respiratory chain NADH dehydrogenase (Complex I) which catalyzes electron transfer from NADH through the respiratory chain, using ubiquinone as an electron acceptor. Essential for the catalytic activity and assembly of complex I. This is NADH-ubiquinone oxidoreductase chain 1 (Mtnd1) from Mus musculus (Mouse).